A 103-amino-acid polypeptide reads, in one-letter code: MKSLLLLSILAALAVAALCYESHESLESYEINPFINRRNANSFISPQQRWRAKAQERIRELNKPQYELNREACDDFKLCERYAMVYGYNAAYDRYFRQRRGAK.

A signal peptide spans 1-19 (MKSLLLLSILAALAVAALC). At glutamate 21 the chain carries 4-carboxyglutamate; partial. Serine 22, serine 25, and serine 28 each carry phosphoserine. Residues 51–97 (RAKAQERIRELNKPQYELNREACDDFKLCERYAMVYGYNAAYDRYFR) enclose the Gla domain. A 4-carboxyglutamate mark is found at glutamate 56, glutamate 60, glutamate 67, and glutamate 71. Cysteines 73 and 79 form a disulfide. A propeptide spans 99 to 102 (RRGA) (removed in short form; probably by carboxypeptidase N). Residue lysine 103 is a propeptide, removed in long form; probably by carboxypeptidase H.

It belongs to the osteocalcin/matrix Gla protein family. Requires vitamin K-dependent gamma-carboxylation for its function.

The protein localises to the secreted. Associates with the organic matrix of bone and cartilage. Thought to act as an inhibitor of bone formation. In Bos taurus (Bovine), this protein is Matrix Gla protein (MGP).